A 158-amino-acid chain; its full sequence is Transcription factor bHLH146 (158 aa).

Over residues 77-90 (SSSSNPTTTTSSSS) the composition is skewed to low complexity. A disordered region spans residues 77-110 (SSSSNPTTTTSSSSDGIRILERPDKEGGNEEGGI). Positions 94 to 110 (RILERPDKEGGNEEGGI) are enriched in basic and acidic residues. The bHLH; atypical domain maps to 94-143 (RILERPDKEGGNEEGGIEERLRELKKLLPGGEEMNVEEMLSEIGNYIKCL).

Belongs to the bHLH protein family.

The protein localises to the nucleus. In Arabidopsis thaliana (Mouse-ear cress), this protein is Transcription factor bHLH146 (BHLH146).